Here is a 1172-residue protein sequence, read N- to C-terminus: Lysylphosphatidylglycerol biosynthesis bifunctional protein LysX (1172 aa).

The disordered stretch occupies residues 1–34; it reads MGLHLTVPGLRRDGRGVQSNSHDTSSKTTADISR. Positions 1–663 are phosphatidylglycerol lysyltransferase; the sequence is MGLHLTVPGL…LLHHDGSAPD (663 aa). Positions 17–31 are enriched in polar residues; sequence VQSNSHDTSSKTTAD. A run of 7 helical transmembrane segments spans residues 80–100, 122–142, 146–166, 177–197, 214–234, 272–292, and 612–632; these read VPAA…LASV, FPDT…ALTA, IAWL…AAEI, FGEN…VLGY, AVWL…VELF, AIFG…LFLS, and VIPR…LPFS. A lysine--tRNA ligase region spans residues 664 to 1172; sequence VSGLRQVGLT…TLPFPLAKPH (509 aa). Positions 726–804 form a DNA-binding region, OB; the sequence is VSVSGRIMRI…SLIVSGWRLI (79 aa). Mg(2+)-binding residues include D1084 and E1091.

This sequence in the N-terminal section; belongs to the LPG synthetase family. It in the C-terminal section; belongs to the class-II aminoacyl-tRNA synthetase family. Mg(2+) serves as cofactor.

The protein resides in the cell membrane. The enzyme catalyses tRNA(Lys) + L-lysine + ATP = L-lysyl-tRNA(Lys) + AMP + diphosphate. It carries out the reaction L-lysyl-tRNA(Lys) + a 1,2-diacyl-sn-glycero-3-phospho-(1'-sn-glycerol) = a 1,2-diacyl-sn-glycero-3-phospho-1'-(3'-O-L-lysyl)-sn-glycerol + tRNA(Lys). In terms of biological role, catalyzes the production of L-lysyl-tRNA(Lys)transfer and the transfer of a lysyl group from L-lysyl-tRNA(Lys) to membrane-bound phosphatidylglycerol (PG), which produces lysylphosphatidylglycerol (LPG), one of the components of the bacterial membrane with a positive net charge. LPG synthesis contributes to the resistance to cationic antimicrobial peptides (CAMPs) and likely protects M.tuberculosis against the CAMPs produced by competiting microorganisms (bacteriocins). In fact, the modification of anionic phosphatidylglycerol with positively charged L-lysine results in repulsion of the peptides. This Mycobacterium bovis (strain ATCC BAA-935 / AF2122/97) protein is Lysylphosphatidylglycerol biosynthesis bifunctional protein LysX (lysX).